The chain runs to 128 residues: UPF0102 protein Mext_0406 (128 aa).

Belongs to the UPF0102 family.

The polypeptide is UPF0102 protein Mext_0406 (Methylorubrum extorquens (strain PA1) (Methylobacterium extorquens)).